A 141-amino-acid chain; its full sequence is Globin, extracellular monomeric (141 aa).

In terms of domain architecture, Globin spans 1–141 (ECDALQRFKV…LGVITGAIHD (141 aa)). Residues Cys-2 and Cys-131 are joined by a disulfide bond. His-94 is a heme b binding site.

It belongs to the globin family. The giant hemoglobins of worms are formed of a monomeric subunit and a disulfide-bonded trimer. This subunit is monomeric.

It is found in the secreted. This Tubifex tubifex (Sludge worm) protein is Globin, extracellular monomeric.